Consider the following 717-residue polypeptide: Fatty acid oxidation complex subunit alpha (717 aa).

The enoyl-CoA hydratase/isomerase stretch occupies residues 1–190 (MIHAGNAITV…KDGAVDAVVA (190 aa)). Substrate is bound at residue D298. Positions 313–717 (HPVNQAAVLG…MAANNKKFYG (405 aa)) are 3-hydroxyacyl-CoA dehydrogenase. NAD(+)-binding positions include M326, D345, 402-404 (VTE), K409, and S431. H452 acts as the For 3-hydroxyacyl-CoA dehydrogenase activity in catalysis. An NAD(+)-binding site is contributed by N455. N502 serves as a coordination point for substrate.

This sequence in the N-terminal section; belongs to the enoyl-CoA hydratase/isomerase family. In the C-terminal section; belongs to the 3-hydroxyacyl-CoA dehydrogenase family. In terms of assembly, heterotetramer of two alpha chains (FadB) and two beta chains (FadA).

It catalyses the reaction a (3S)-3-hydroxyacyl-CoA + NAD(+) = a 3-oxoacyl-CoA + NADH + H(+). It carries out the reaction a (3S)-3-hydroxyacyl-CoA = a (2E)-enoyl-CoA + H2O. The catalysed reaction is a 4-saturated-(3S)-3-hydroxyacyl-CoA = a (3E)-enoyl-CoA + H2O. The enzyme catalyses (3S)-3-hydroxybutanoyl-CoA = (3R)-3-hydroxybutanoyl-CoA. It catalyses the reaction a (3Z)-enoyl-CoA = a 4-saturated (2E)-enoyl-CoA. It carries out the reaction a (3E)-enoyl-CoA = a 4-saturated (2E)-enoyl-CoA. It participates in lipid metabolism; fatty acid beta-oxidation. Functionally, involved in the aerobic and anaerobic degradation of long-chain fatty acids via beta-oxidation cycle. Catalyzes the formation of 3-oxoacyl-CoA from enoyl-CoA via L-3-hydroxyacyl-CoA. It can also use D-3-hydroxyacyl-CoA and cis-3-enoyl-CoA as substrate. This is Fatty acid oxidation complex subunit alpha from Acinetobacter baumannii (strain ACICU).